The following is a 445-amino-acid chain: Branched-chain amino acid permease BraB (445 aa).

The next 12 helical transmembrane spans lie at 11 to 31, 45 to 65, 79 to 99, 122 to 142, 158 to 178, 192 to 212, 233 to 253, 275 to 295, 311 to 331, 339 to 359, 375 to 395, and 415 to 435; these read IIIGFMLFALFFGAGNMIYPP, IGGFLLTGVGLPLLGIIAIAL, PVFGTIFTVVLYLSIGPLFAI, LSLLIFTLIFFGVTYYLALNP, FTIILIIVLKAIFTPMGGLGA, FLEGYKTMDALASIVFGVVVV, AGVIAALGLTFIYVSLAYLGA, YLFGSLGNIVLGAAITVACLT, LIPALSYKIVVTIVTLFSLII, IIAFSVPILSAIYPLAIVIIV, IACLIGTGLFSILDGIKAAGF, and IGWVLPGIVGAVIGYVLTLFI.

It belongs to the branched chain amino acid transporter family.

It is found in the cell membrane. Its function is as follows. Branched-chain amino acid transport system which is involved in the uptake of isoleucine, valine and probably leucine. Together with BcaP and BrnQ, plays an important role in the activation of CodY, a branched-chain amino acid-responsive transcriptional regulator that controls the expression of several dozen transcription units in B.subtilis. The chain is Branched-chain amino acid permease BraB from Bacillus subtilis (strain 168).